The primary structure comprises 850 residues: Probable beta-glucosidase J (850 aa).

N-linked (GlcNAc...) asparagine glycosylation is found at Asn-43 and Asn-52. Residue Asp-254 is part of the active site. The PA14 domain maps to 423–583 (TGERGYTFRV…DAETAIKQAV (161 aa)). The N-linked (GlcNAc...) asparagine glycan is linked to Asn-508.

It belongs to the glycosyl hydrolase 3 family.

It localises to the secreted. The enzyme catalyses Hydrolysis of terminal, non-reducing beta-D-glucosyl residues with release of beta-D-glucose.. The protein operates within glycan metabolism; cellulose degradation. Its function is as follows. Beta-glucosidases are one of a number of cellulolytic enzymes involved in the degradation of cellulosic biomass. Catalyzes the last step releasing glucose from the inhibitory cellobiose. This chain is Probable beta-glucosidase J (bglJ), found in Emericella nidulans (strain FGSC A4 / ATCC 38163 / CBS 112.46 / NRRL 194 / M139) (Aspergillus nidulans).